The chain runs to 255 residues: 5-oxoprolinase subunit A (255 aa).

The protein belongs to the LamB/PxpA family. In terms of assembly, forms a complex composed of PxpA, PxpB and PxpC.

The catalysed reaction is 5-oxo-L-proline + ATP + 2 H2O = L-glutamate + ADP + phosphate + H(+). Functionally, catalyzes the cleavage of 5-oxoproline to form L-glutamate coupled to the hydrolysis of ATP to ADP and inorganic phosphate. This is 5-oxoprolinase subunit A from Campylobacter jejuni subsp. doylei (strain ATCC BAA-1458 / RM4099 / 269.97).